The sequence spans 149 residues: Large ribosomal subunit protein bL9 (149 aa).

It belongs to the bacterial ribosomal protein bL9 family.

Its function is as follows. Binds to the 23S rRNA. The chain is Large ribosomal subunit protein bL9 from Xylella fastidiosa (strain M23).